Here is a 341-residue protein sequence, read N- to C-terminus: Heat-inducible transcription repressor HrcA (341 aa).

The protein belongs to the HrcA family.

Negative regulator of class I heat shock genes (grpE-dnaK-dnaJ and groELS operons). Prevents heat-shock induction of these operons. The chain is Heat-inducible transcription repressor HrcA from Brevibacillus brevis (strain 47 / JCM 6285 / NBRC 100599).